A 244-amino-acid chain; its full sequence is 1-(5-phosphoribosyl)-5-[(5-phosphoribosylamino)methylideneamino] imidazole-4-carboxamide isomerase (244 aa).

The active-site Proton acceptor is the Asp15. Residue Asp136 is the Proton donor of the active site.

This sequence belongs to the HisA/HisF family.

The protein localises to the cytoplasm. It catalyses the reaction 1-(5-phospho-beta-D-ribosyl)-5-[(5-phospho-beta-D-ribosylamino)methylideneamino]imidazole-4-carboxamide = 5-[(5-phospho-1-deoxy-D-ribulos-1-ylimino)methylamino]-1-(5-phospho-beta-D-ribosyl)imidazole-4-carboxamide. The protein operates within amino-acid biosynthesis; L-histidine biosynthesis; L-histidine from 5-phospho-alpha-D-ribose 1-diphosphate: step 4/9. This chain is 1-(5-phosphoribosyl)-5-[(5-phosphoribosylamino)methylideneamino] imidazole-4-carboxamide isomerase, found in Dehalococcoides mccartyi (strain CBDB1).